Here is a 296-residue protein sequence, read N- to C-terminus: Glycine--tRNA ligase alpha subunit (296 aa).

It belongs to the class-II aminoacyl-tRNA synthetase family. In terms of assembly, tetramer of two alpha and two beta subunits.

It localises to the cytoplasm. It catalyses the reaction tRNA(Gly) + glycine + ATP = glycyl-tRNA(Gly) + AMP + diphosphate. The polypeptide is Glycine--tRNA ligase alpha subunit (Maricaulis maris (strain MCS10) (Caulobacter maris)).